A 426-amino-acid chain; its full sequence is Histidine--tRNA ligase (426 aa).

It belongs to the class-II aminoacyl-tRNA synthetase family. As to quaternary structure, homodimer.

The protein resides in the cytoplasm. The enzyme catalyses tRNA(His) + L-histidine + ATP = L-histidyl-tRNA(His) + AMP + diphosphate + H(+). This is Histidine--tRNA ligase from Streptococcus equi subsp. equi (strain 4047).